We begin with the raw amino-acid sequence, 156 residues long: ATP synthase subunit b (156 aa).

A helical membrane pass occupies residues 7–27 (IFFQMLVFFVLGWFTMKFVWP).

It belongs to the ATPase B chain family. F-type ATPases have 2 components, F(1) - the catalytic core - and F(0) - the membrane proton channel. F(1) has five subunits: alpha(3), beta(3), gamma(1), delta(1), epsilon(1). F(0) has three main subunits: a(1), b(2) and c(10-14). The alpha and beta chains form an alternating ring which encloses part of the gamma chain. F(1) is attached to F(0) by a central stalk formed by the gamma and epsilon chains, while a peripheral stalk is formed by the delta and b chains.

The protein localises to the cell inner membrane. F(1)F(0) ATP synthase produces ATP from ADP in the presence of a proton or sodium gradient. F-type ATPases consist of two structural domains, F(1) containing the extramembraneous catalytic core and F(0) containing the membrane proton channel, linked together by a central stalk and a peripheral stalk. During catalysis, ATP synthesis in the catalytic domain of F(1) is coupled via a rotary mechanism of the central stalk subunits to proton translocation. Functionally, component of the F(0) channel, it forms part of the peripheral stalk, linking F(1) to F(0). In Bordetella pertussis (strain Tohama I / ATCC BAA-589 / NCTC 13251), this protein is ATP synthase subunit b.